We begin with the raw amino-acid sequence, 249 residues long: 5'-nucleotidase SurE (249 aa).

A divalent metal cation is bound by residues D8, D9, S39, and N91.

This sequence belongs to the SurE nucleotidase family. A divalent metal cation is required as a cofactor.

It localises to the cytoplasm. The catalysed reaction is a ribonucleoside 5'-phosphate + H2O = a ribonucleoside + phosphate. In terms of biological role, nucleotidase that shows phosphatase activity on nucleoside 5'-monophosphates. The chain is 5'-nucleotidase SurE from Ectopseudomonas mendocina (strain ymp) (Pseudomonas mendocina).